The sequence spans 128 residues: uncharacterized protein (128 aa).

A disordered region spans residues 1–26; that stretch reads MNSATSETTTNTGAAETTTSTGAAET. A helical transmembrane segment spans residues 105-127; that stretch reads IANGLLTNNGISVFISTVLLAIV.

It belongs to the flocculin family.

Its subcellular location is the membrane. This is an uncharacterized protein from Saccharomyces cerevisiae (strain ATCC 204508 / S288c) (Baker's yeast).